Consider the following 369-residue polypeptide: ATP-dependent (S)-NAD(P)H-hydrate dehydratase (369 aa).

One can recognise a YjeF C-terminal domain in the interval 14-356; sequence LFQKARKLVP…DEVHESFLTL (343 aa). Residues Gly-126 and 179-185 each bind (6S)-NADPHX; that span reads NVNEFSR. ATP contacts are provided by residues 231 to 235 and 250 to 259; these read KGPHD and GGLKRSGGQG. Position 260 (Asp-260) interacts with (6S)-NADPHX. The span at 284–306 shows a compositional bias: basic and acidic residues; sequence GEQEHSKEAENKEEVQGELESNK. Positions 284-307 are disordered; it reads GEQEHSKEAENKEEVQGELESNKR.

It belongs to the NnrD/CARKD family. Mg(2+) is required as a cofactor.

Its subcellular location is the cytoplasm. The catalysed reaction is (6S)-NADHX + ATP = ADP + phosphate + NADH + H(+). It catalyses the reaction (6S)-NADPHX + ATP = ADP + phosphate + NADPH + H(+). In terms of biological role, catalyzes the dehydration of the S-form of NAD(P)HX at the expense of ATP, which is converted to ADP. Together with NAD(P)HX epimerase, which catalyzes the epimerization of the S- and R-forms, the enzyme allows the repair of both epimers of NAD(P)HX, a damaged form of NAD(P)H that is a result of enzymatic or heat-dependent hydration. This is ATP-dependent (S)-NAD(P)H-hydrate dehydratase from Emericella nidulans (strain FGSC A4 / ATCC 38163 / CBS 112.46 / NRRL 194 / M139) (Aspergillus nidulans).